We begin with the raw amino-acid sequence, 476 residues long: MNFETVIGLEVHVELKTNSKIFSSAPAHFGAEPNTNTTVVDLGMPGVLPVLNKRAVEFGMKAAMAINCEIAKHTKFDRKNYFYPDNPKAYQISQFDKPIGEHGWIEIEVGGKKKKIGITRLHLEEDAGKNTHTSHGYSLVDINRQGTPLIEIVSEPDIRSAEEAYAYLEKLKSIIQYTGVSDVKMEEGSMRCDANISIRPIGQEEFGVKTELKNLNSFNNVRKGIEYEEKRQAEVLKSGGIIEQETRRFEEATGKTSLMRIKEGSDDYRYFPEPDLVDLFIDDAWKERIRAEIPELPDKRQIRYINDLGLPAYDAMVLTLTKEMSDFFEATLAAGADAKQASNWLMGEVSAYLNAEQKELHETGLTPENLAGMIKLIEAGTISSKIAKKVFRELAQNGGDAEQVVKDKGLVQISDEGALRTIISEILDNNEQSIVDFKNGKDRAVGFLVGQVMKATKGQANPPMVNKLLLEEMNKR.

This sequence belongs to the GatB/GatE family. GatB subfamily. As to quaternary structure, heterotrimer of A, B and C subunits.

It carries out the reaction L-glutamyl-tRNA(Gln) + L-glutamine + ATP + H2O = L-glutaminyl-tRNA(Gln) + L-glutamate + ADP + phosphate + H(+). It catalyses the reaction L-aspartyl-tRNA(Asn) + L-glutamine + ATP + H2O = L-asparaginyl-tRNA(Asn) + L-glutamate + ADP + phosphate + 2 H(+). Functionally, allows the formation of correctly charged Asn-tRNA(Asn) or Gln-tRNA(Gln) through the transamidation of misacylated Asp-tRNA(Asn) or Glu-tRNA(Gln) in organisms which lack either or both of asparaginyl-tRNA or glutaminyl-tRNA synthetases. The reaction takes place in the presence of glutamine and ATP through an activated phospho-Asp-tRNA(Asn) or phospho-Glu-tRNA(Gln). The polypeptide is Aspartyl/glutamyl-tRNA(Asn/Gln) amidotransferase subunit B (Listeria monocytogenes serotype 4b (strain CLIP80459)).